Consider the following 337-residue polypeptide: m7GpppX diphosphatase (337 aa).

Residues 1-35 (MADAAPQLGKRKRELDVEEAHAASTEEKEAGVGNG) are disordered. The residue at position 2 (alanine 2) is an N-acetylalanine. Positions 10 to 13 (KRKR) match the nuclear localization signal (NLS) motif. Basic and acidic residues predominate over residues 13-30 (RELDVEEAHAASTEEKEA). Residues serine 24 and serine 101 each carry the phosphoserine modification. Lysine 138 and lysine 142 each carry N6-acetyllysine. The nuclear export sequence (NES) motif lies at 142 to 154 (KYLRQDLRLIRET). Substrate-binding positions include tryptophan 175, glutamate 185, aspartate 205, lysine 207, and 268–279 (HYLPSYYHLHVH). Positions 275–279 (HLHVH) match the Histidine triad motif motif. Histidine 277 functions as the Nucleophile in the catalytic mechanism.

The protein belongs to the HIT family. In terms of assembly, homodimer. Associates with components of the exosome multienzyme ribonuclease complex, such as EXOSC3 and EXOSC4. Interacts with NDOR1. As to expression, detected in liver, brain, kidney, testis and prostate.

The protein localises to the cytoplasm. Its subcellular location is the nucleus. The enzyme catalyses a 5'-end (N(7)-methyl 5'-triphosphoguanosine)-ribonucleoside in mRNA + H2O = N(7)-methyl-GMP + a 5'-end diphospho-ribonucleoside in mRNA + 2 H(+). With respect to regulation, the hydrolytic product 7-methylguanosine diphosphate (m7GDP) efficiently inhibits the decapping scavenger activity and acts as a competitive inhibitor in vitro. Inhibited by 2,4-diaminoquinazoline. Functionally, decapping scavenger enzyme that catalyzes the cleavage of a residual cap structure following the degradation of mRNAs by the 3'-&gt;5' exosome-mediated mRNA decay pathway. Hydrolyzes cap analog structures like 7-methylguanosine nucleoside triphosphate (m7GpppG) with up to 10 nucleotide substrates (small capped oligoribonucleotides) and specifically releases 5'-phosphorylated RNA fragments and 7-methylguanosine monophosphate (m7GMP). Cleaves cap analog structures like tri-methyl guanosine nucleoside triphosphate (m3(2,2,7)GpppG) with very poor efficiency. Does not hydrolyze unmethylated cap analog (GpppG) and shows no decapping activity on intact m7GpppG-capped mRNA molecules longer than 25 nucleotides. Does not hydrolyze 7-methylguanosine diphosphate (m7GDP) to m7GMP. May also play a role in the 5'-&gt;3 mRNA decay pathway; m7GDP, the downstream product released by the 5'-&gt;3' mRNA mediated decapping activity, may be also converted by DCPS to m7GMP. Binds to m7GpppG and strongly to m7GDP. Plays a role in first intron splicing of pre-mRNAs. Inhibits activation-induced cell death. The polypeptide is m7GpppX diphosphatase (DCPS) (Homo sapiens (Human)).